A 331-amino-acid polypeptide reads, in one-letter code: Protein RecA (331 aa).

66-73 provides a ligand contact to ATP; it reads GPESSGKT.

Belongs to the RecA family.

The protein resides in the cytoplasm. Its function is as follows. Can catalyze the hydrolysis of ATP in the presence of single-stranded DNA, the ATP-dependent uptake of single-stranded DNA by duplex DNA, and the ATP-dependent hybridization of homologous single-stranded DNAs. It interacts with LexA causing its activation and leading to its autocatalytic cleavage. The sequence is that of Protein RecA from Acholeplasma laidlawii.